The sequence spans 172 residues: Stellate protein CG33236/CG33240/CG33244/CG33245 (172 aa).

Belongs to the casein kinase 2 subunit beta family. In terms of assembly, interacts in vitro with the casein kinase 2 alpha subunit (CkII-alpha). The relevance of such interaction is however unclear in vivo. As to expression, probably not expressed in wild-type flies. In males lacking the Y chromosome, it is testis-specific and constitutes the main component of star-shaped crystals.

Functionally, unknown. In males lacking the Y chromosome, its strong overexpression leads to the appearance of proteinaceous star-shaped crystals in the primary spermatocytes causing meiotic drive, possibly by interfering with normal casein kinase 2 activity. This is Stellate protein CG33236/CG33240/CG33244/CG33245 (Ste:CG33236) from Drosophila melanogaster (Fruit fly).